The primary structure comprises 273 residues: NAD kinase (273 aa).

The active-site Proton acceptor is the aspartate 53. Residues aspartate 53–glycine 54, arginine 58, asparagine 128–glutamate 129, aspartate 157, threonine 168–serine 173, and alanine 192 contribute to the NAD(+) site.

Belongs to the NAD kinase family. A divalent metal cation is required as a cofactor.

Its subcellular location is the cytoplasm. It catalyses the reaction NAD(+) + ATP = ADP + NADP(+) + H(+). Its function is as follows. Involved in the regulation of the intracellular balance of NAD and NADP, and is a key enzyme in the biosynthesis of NADP. Catalyzes specifically the phosphorylation on 2'-hydroxyl of the adenosine moiety of NAD to yield NADP. This is NAD kinase from Finegoldia magna (strain ATCC 29328 / DSM 20472 / WAL 2508) (Peptostreptococcus magnus).